Reading from the N-terminus, the 151-residue chain is Acidic phospholipase A2 3 (151 aa).

A signal peptide spans 1–27 (MYPAHLLVLLAVCVSLLGAASIPARPL). Cystine bridges form between Cys-38–Cys-104, Cys-54–Cys-151, Cys-56–Cys-72, Cys-71–Cys-132, Cys-78–Cys-125, Cys-88–Cys-118, and Cys-111–Cys-123. Positions 55, 57, and 59 each coordinate Ca(2+). Residue His-75 is part of the active site. Asp-76 serves as a coordination point for Ca(2+). Asp-126 is an active-site residue.

Belongs to the phospholipase A2 family. Group I subfamily. D49 sub-subfamily. Ca(2+) serves as cofactor. In terms of tissue distribution, expressed by the venom gland.

Its subcellular location is the secreted. It carries out the reaction a 1,2-diacyl-sn-glycero-3-phosphocholine + H2O = a 1-acyl-sn-glycero-3-phosphocholine + a fatty acid + H(+). Functionally, PLA2 catalyzes the calcium-dependent hydrolysis of the 2-acyl groups in 3-sn-phosphoglycerides. This chain is Acidic phospholipase A2 3, found in Tropidechis carinatus (Australian rough-scaled snake).